The primary structure comprises 424 residues: GTPase HflX (424 aa).

In terms of domain architecture, Hflx-type G spans 194–364 (YTVALTGYTG…AVVEMLPEKV (171 aa)). Residues 200 to 207 (GYTGAGKT), 225 to 229 (FATLS), 246 to 249 (DTIG), 314 to 317 (NKID), and 342 to 344 (SAA) each bind GTP. Residues Thr-207 and Thr-227 each coordinate Mg(2+).

Belongs to the TRAFAC class OBG-HflX-like GTPase superfamily. HflX GTPase family. Monomer. Associates with the 50S ribosomal subunit. It depends on Mg(2+) as a cofactor.

It is found in the cytoplasm. Functionally, GTPase that associates with the 50S ribosomal subunit and may have a role during protein synthesis or ribosome biogenesis. This is GTPase HflX from Thermofilum pendens (strain DSM 2475 / Hrk 5).